A 423-amino-acid chain; its full sequence is Mannose-6-phosphate isomerase (423 aa).

The residue at position 2 (Ala2) is an N-acetylalanine. Phosphoserine occurs at positions 102 and 108. Zn(2+)-binding residues include Gln110, His112, Glu137, and His276. Residue Arg295 is part of the active site.

It belongs to the mannose-6-phosphate isomerase type 1 family. The cofactor is Zn(2+).

Its subcellular location is the cytoplasm. The enzyme catalyses D-mannose 6-phosphate = D-fructose 6-phosphate. It participates in nucleotide-sugar biosynthesis; GDP-alpha-D-mannose biosynthesis; alpha-D-mannose 1-phosphate from D-fructose 6-phosphate: step 1/2. Its function is as follows. Isomerase that catalyzes the interconversion of fructose-6-P and mannose-6-P and has a critical role in the supply of D-mannose derivatives required for many eukaryotic glycosylation reactions. This Macaca fascicularis (Crab-eating macaque) protein is Mannose-6-phosphate isomerase (MPI).